We begin with the raw amino-acid sequence, 179 residues long: MNPRRKSRLTIILFVLLGVTIASSLVLYALRQNIDLFYTPSEVISGKNDDPDTIPEVGQRIRVGGMVVEGTVKRDPNSLKVSFNVNDIGPEITVEYEGILPDLFREGQGIVAQGVLKEPKLLEATEVLAKHDENYVPPDLSEKMEQVHKPMGISNQDMQGESDRDRLDKAVNSVEEGKK.

At Met-1–Arg-8 the chain is on the cytoplasmic side. The helical; Signal-anchor for type II membrane protein transmembrane segment at Leu-9 to Ala-29 threads the bilayer. The Periplasmic portion of the chain corresponds to Leu-30–Lys-179. Residues His-131 and Tyr-135 each coordinate heme. Basic and acidic residues-rich tracts occupy residues Pro-138–His-148 and Glu-161–Lys-179. Residues Pro-138–Lys-179 form a disordered region.

It belongs to the CcmE/CycJ family.

The protein localises to the cell inner membrane. Its function is as follows. Heme chaperone required for the biogenesis of c-type cytochromes. Transiently binds heme delivered by CcmC and transfers the heme to apo-cytochromes in a process facilitated by CcmF and CcmH. The sequence is that of Cytochrome c-type biogenesis protein CcmE from Mannheimia succiniciproducens (strain KCTC 0769BP / MBEL55E).